A 453-amino-acid chain; its full sequence is Bis(5'-adenosyl)-triphosphatase ENPP4 (453 aa).

The N-terminal stretch at 1–15 (MKLLVILLFSGLITG) is a signal peptide. The Extracellular portion of the chain corresponds to 16 to 407 (FRSDSSSSLP…DQWCINLPEA (392 aa)). Residues Asp-34 and Thr-70 each contribute to the Zn(2+) site. Thr-70 (AMP-threonine intermediate) is an active-site residue. Residues Asn-91 and Tyr-154 each coordinate substrate. Asn-155 and Asn-166 each carry an N-linked (GlcNAc...) asparagine glycan. Asp-189, His-193, Asp-237, and His-238 together coordinate Zn(2+). Substrate is bound at residue Asp-189. Residues Cys-254 and Cys-287 are joined by a disulfide bond. Asn-276 carries N-linked (GlcNAc...) asparagine glycosylation. His-336 lines the Zn(2+) pocket. A glycan (N-linked (GlcNAc...) asparagine) is linked at Asn-386. An intrachain disulfide couples Cys-394 to Cys-401. A helical transmembrane segment spans residues 408–428 (IAIVIGSLLVLTMLTCLIIIM). The Cytoplasmic portion of the chain corresponds to 429-453 (QNRLSVPRPFSRLQLQEDDDDPLIG).

The protein belongs to the nucleotide pyrophosphatase/phosphodiesterase family. It depends on Zn(2+) as a cofactor. Expressed on the surface of vascular endothelia.

It is found in the cell membrane. It carries out the reaction P(1),P(3)-bis(5'-adenosyl) triphosphate + H2O = AMP + ADP + 2 H(+). Functionally, hydrolyzes extracellular Ap3A into AMP and ADP, and Ap4A into AMP and ATP. Ap3A and Ap4A are diadenosine polyphosphates thought to induce proliferation of vascular smooth muscle cells. Acts as a procoagulant, mediating platelet aggregation at the site of nascent thrombus via release of ADP from Ap3A and activation of ADP receptors. This Homo sapiens (Human) protein is Bis(5'-adenosyl)-triphosphatase ENPP4 (ENPP4).